Consider the following 130-residue polypeptide: Small ribosomal subunit protein uS9 (130 aa).

Residues 98–130 form a disordered region; it reads LKRAGLLTRDPRMKERKKPGLKKARRSPQFSKR. Over residues 111–130 the composition is skewed to basic residues; sequence KERKKPGLKKARRSPQFSKR.

It belongs to the universal ribosomal protein uS9 family.

The protein is Small ribosomal subunit protein uS9 of Staphylococcus haemolyticus (strain JCSC1435).